The following is a 708-amino-acid chain: O-antigen chain terminator bifunctional methyltransferase/kinase WbdD (708 aa).

A methyltransferase region spans residues 1–210 (MTKDLNTLVS…VPRPMYLVSN (210 aa)). Residues 16-17 (YQ), arginine 36, glycine 61, 82-87 (DFQQEN), 108-111 (GRIE), and leucine 128 contribute to the S-adenosyl-L-methionine site. Residues 211–459 (HRVLINDFNQ…AKLPSAEQQR (249 aa)) are kinase. ATP contacts are provided by residues proline 229, histidine 237, 241 to 243 (RRY), lysine 252, glutamate 274, 309 to 311 (EKL), methionine 358, and aspartate 369. Positions 485 to 594 (AGSEALRGQI…EIEKIHRSRS (110 aa)) form a coiled coil. The tract at residues 601-669 (YRYLGLQIHL…RLYRRMNPLP (69 aa)) is required for membrane-binding. The segment at 687-708 (VMHPELLPPEVYEIYLKLTKNK) is required for localizing WbdA to the membrane.

Belongs to the WbdD family. In terms of assembly, interacts with WbdA.

It is found in the cell inner membrane. It catalyses the reaction 3-O-phospho-alpha-D-Man-(1-&gt;2)-alpha-D-Man-(1-&gt;2)-[alpha-D-Man-(1-&gt;3)-alpha-D-Man-(1-&gt;3)-alpha-D-Man-(1-&gt;2)-alpha-D-Man-(1-&gt;2)](n)-alpha-D-Man-(1-&gt;3)-alpha-D-Man-(1-&gt;3)-alpha-D-Man-(1-&gt;3)-alpha-D-GlcNAc-di-trans,octa-cis-undecaprenyl diphosphate + S-adenosyl-L-methionine = 3-O-methylphospho-alpha-D-Man-(1-&gt;2)-alpha-D-Man-(1-&gt;2)-[alpha-D-Man-(1-&gt;3)-alpha-D-Man-(1-&gt;3)-alpha-D-Man-(1-&gt;2)-alpha-D-Man-(1-&gt;2)](n)-alpha-D-Man-(1-&gt;3)-alpha-D-Man-(1-&gt;3)-alpha-D-Man-(1-&gt;3)-alpha-D-GlcNAc-di-trans,octa-cis-undecaprenyl diphosphate + S-adenosyl-L-homocysteine. The catalysed reaction is alpha-D-Man-(1-&gt;2)-alpha-D-Man-(1-&gt;2)-[alpha-D-Man-(1-&gt;3)-alpha-D-Man-(1-&gt;3)-alpha-D-Man-(1-&gt;2)-alpha-D-Man-(1-&gt;2)](n)-alpha-D-Man-(1-&gt;3)-alpha-D-Man-(1-&gt;3)-alpha-D-Man-(1-&gt;3)-alpha-D-GlcNAc-di-trans,octa-cis-undecaprenyl diphosphate + ATP = 3-O-phospho-alpha-D-Man-(1-&gt;2)-alpha-D-Man-(1-&gt;2)-[alpha-D-Man-(1-&gt;3)-alpha-D-Man-(1-&gt;3)-alpha-D-Man-(1-&gt;2)-alpha-D-Man-(1-&gt;2)](n)-alpha-D-Man-(1-&gt;3)-alpha-D-Man-(1-&gt;3)-alpha-D-Man-(1-&gt;3)-alpha-D-GlcNAc-di-trans,octa-cis-undecaprenyl diphosphate + ADP + H(+). The protein operates within bacterial outer membrane biogenesis; LPS O-antigen biosynthesis. Regulates the length of the LPS O-antigen polysaccharide chain. Stops the polymerization of the chain by phosphorylating and then methylating the phosphate on the terminal sugar. This terminal modification is essential for export of the O-antigen across the inner membrane. WbdD is also required for correct localization of the WbdA mannosyltransferase. In Escherichia coli, this protein is O-antigen chain terminator bifunctional methyltransferase/kinase WbdD.